Reading from the N-terminus, the 116-residue chain is Ribosome-binding factor A (116 aa).

This sequence belongs to the RbfA family. As to quaternary structure, monomer. Binds 30S ribosomal subunits, but not 50S ribosomal subunits or 70S ribosomes.

It is found in the cytoplasm. One of several proteins that assist in the late maturation steps of the functional core of the 30S ribosomal subunit. Associates with free 30S ribosomal subunits (but not with 30S subunits that are part of 70S ribosomes or polysomes). Required for efficient processing of 16S rRNA. May interact with the 5'-terminal helix region of 16S rRNA. The sequence is that of Ribosome-binding factor A from Streptococcus pneumoniae (strain ATCC 700669 / Spain 23F-1).